The primary structure comprises 413 residues: Serine hydroxymethyltransferase (413 aa).

(6S)-5,6,7,8-tetrahydrofolate is bound by residues Leu119 and 123–125; that span reads GHL. An N6-(pyridoxal phosphate)lysine modification is found at Lys228. 351-353 is a (6S)-5,6,7,8-tetrahydrofolate binding site; it reads SPF.

Belongs to the SHMT family. In terms of assembly, homodimer. Requires pyridoxal 5'-phosphate as cofactor.

The protein localises to the cytoplasm. The catalysed reaction is (6R)-5,10-methylene-5,6,7,8-tetrahydrofolate + glycine + H2O = (6S)-5,6,7,8-tetrahydrofolate + L-serine. It functions in the pathway one-carbon metabolism; tetrahydrofolate interconversion. It participates in amino-acid biosynthesis; glycine biosynthesis; glycine from L-serine: step 1/1. Catalyzes the reversible interconversion of serine and glycine with tetrahydrofolate (THF) serving as the one-carbon carrier. This reaction serves as the major source of one-carbon groups required for the biosynthesis of purines, thymidylate, methionine, and other important biomolecules. Also exhibits THF-independent aldolase activity toward beta-hydroxyamino acids, producing glycine and aldehydes, via a retro-aldol mechanism. The protein is Serine hydroxymethyltransferase of Clostridium botulinum (strain 657 / Type Ba4).